The chain runs to 506 residues: GMP synthase [glutamine-hydrolyzing] (506 aa).

The region spanning 4–192 (KLIILDFGSQ…FLDICGMKRD (189 aa)) is the Glutamine amidotransferase type-1 domain. The active-site Nucleophile is the Cys79. Catalysis depends on residues His167 and Glu169. A GMPS ATP-PPase domain is found at 193–381 (WTPASFIEAT…LGMMPHLIHR (189 aa)). 220–226 (SGGVDSS) serves as a coordination point for ATP.

Homodimer.

It catalyses the reaction XMP + L-glutamine + ATP + H2O = GMP + L-glutamate + AMP + diphosphate + 2 H(+). It participates in purine metabolism; GMP biosynthesis; GMP from XMP (L-Gln route): step 1/1. Functionally, catalyzes the synthesis of GMP from XMP. The polypeptide is GMP synthase [glutamine-hydrolyzing] (Porphyromonas gingivalis (strain ATCC 33277 / DSM 20709 / CIP 103683 / JCM 12257 / NCTC 11834 / 2561)).